Consider the following 393-residue polypeptide: NAD(P)H-quinone oxidoreductase subunit H, chloroplastic (393 aa).

The protein belongs to the complex I 49 kDa subunit family. As to quaternary structure, NDH is composed of at least 16 different subunits, 5 of which are encoded in the nucleus.

The protein resides in the plastid. Its subcellular location is the chloroplast thylakoid membrane. It catalyses the reaction a plastoquinone + NADH + (n+1) H(+)(in) = a plastoquinol + NAD(+) + n H(+)(out). The enzyme catalyses a plastoquinone + NADPH + (n+1) H(+)(in) = a plastoquinol + NADP(+) + n H(+)(out). In terms of biological role, NDH shuttles electrons from NAD(P)H:plastoquinone, via FMN and iron-sulfur (Fe-S) centers, to quinones in the photosynthetic chain and possibly in a chloroplast respiratory chain. The immediate electron acceptor for the enzyme in this species is believed to be plastoquinone. Couples the redox reaction to proton translocation, and thus conserves the redox energy in a proton gradient. In Populus alba (White poplar), this protein is NAD(P)H-quinone oxidoreductase subunit H, chloroplastic.